We begin with the raw amino-acid sequence, 303 residues long: Methionyl-tRNA formyltransferase (303 aa).

110–113 (SLLP) lines the (6S)-5,6,7,8-tetrahydrofolate pocket.

Belongs to the Fmt family.

It catalyses the reaction L-methionyl-tRNA(fMet) + (6R)-10-formyltetrahydrofolate = N-formyl-L-methionyl-tRNA(fMet) + (6S)-5,6,7,8-tetrahydrofolate + H(+). Its function is as follows. Attaches a formyl group to the free amino group of methionyl-tRNA(fMet). The formyl group appears to play a dual role in the initiator identity of N-formylmethionyl-tRNA by promoting its recognition by IF2 and preventing the misappropriation of this tRNA by the elongation apparatus. The polypeptide is Methionyl-tRNA formyltransferase (Ehrlichia ruminantium (strain Welgevonden)).